Consider the following 303-residue polypeptide: Lipoyl synthase (303 aa).

Residues Cys-40, Cys-45, Cys-51, Cys-67, Cys-71, Cys-74, and Ser-280 each contribute to the [4Fe-4S] cluster site. A Radical SAM core domain is found at 53–269 (AVRKTATFMI…KEIALSKGFS (217 aa)).

This sequence belongs to the radical SAM superfamily. Lipoyl synthase family. [4Fe-4S] cluster serves as cofactor.

The protein localises to the cytoplasm. It carries out the reaction [[Fe-S] cluster scaffold protein carrying a second [4Fe-4S](2+) cluster] + N(6)-octanoyl-L-lysyl-[protein] + 2 oxidized [2Fe-2S]-[ferredoxin] + 2 S-adenosyl-L-methionine + 4 H(+) = [[Fe-S] cluster scaffold protein] + N(6)-[(R)-dihydrolipoyl]-L-lysyl-[protein] + 4 Fe(3+) + 2 hydrogen sulfide + 2 5'-deoxyadenosine + 2 L-methionine + 2 reduced [2Fe-2S]-[ferredoxin]. It functions in the pathway protein modification; protein lipoylation via endogenous pathway; protein N(6)-(lipoyl)lysine from octanoyl-[acyl-carrier-protein]. In terms of biological role, catalyzes the radical-mediated insertion of two sulfur atoms into the C-6 and C-8 positions of the octanoyl moiety bound to the lipoyl domains of lipoate-dependent enzymes, thereby converting the octanoylated domains into lipoylated derivatives. The sequence is that of Lipoyl synthase from Halalkalibacterium halodurans (strain ATCC BAA-125 / DSM 18197 / FERM 7344 / JCM 9153 / C-125) (Bacillus halodurans).